The chain runs to 743 residues: Mitochondrial exoribonuclease DSS-1 (743 aa).

A mitochondrion-targeting transit peptide spans 1–67 (MTPRRVAKLV…KELLHLQRSL (67 aa)). The RNB domain maps to 186–542 (THNPAYAIDS…VHHQLKVWLW (357 aa)). The segment at 320 to 357 (VGNQHHHTERESTQASPAKREEGKKGMVASGGTSSCRP) is disordered. Residues 325-344 (HHTERESTQASPAKREEGKK) show a composition bias toward basic and acidic residues.

Belongs to the RNR ribonuclease family. Component of the mitochondrial 3' processome (MPsome) complex composed at least of terminal uridylyltransferase KRET1/TUT1, 3'-5' exonuclease DSS1, MPSS1, MPSS2 and MPSS3. Within the complex, interacts with KRET1 and MPSS2. Component of the mitochondrial degradosome complex composed at least of 3'-5' exonuclease DSS1 and helicase SUV3. Within the complex, interacts with helicase SUV3.

The protein localises to the mitochondrion. The enzyme catalyses Exonucleolytic cleavage in the 3'- to 5'-direction to yield nucleoside 5'-phosphates.. Functionally, 3'-5'exoribonuclease which is involved in the post-transcriptional processing, editing and degradation of mitochondrial RNAs, including mRNAs, rRNAs and guided RNAs (gRNA). As part of the mitochondrial 3' processome (MPsome), involved in the maturation of guided RNA (gRNA) precursors by catalyzing the processive 3'-5' degradation of uridylated gRNA precursors. Plays a role in the degradation of 12S rRNA processing intermediates and maturation by-products. The protein is Mitochondrial exoribonuclease DSS-1 of Trypanosoma brucei brucei.